We begin with the raw amino-acid sequence, 207 residues long: Nuclear transcription factor Y subunit beta (207 aa).

Positions 1 to 52 (MTMDGDSSTTDASQLGISADYIGGSHYVIQPHDDTEDSMNDHEDTNGSKESF) are a domain. Residues 27-52 (YVIQPHDDTEDSMNDHEDTNGSKESF) form a disordered region. Positions 39–52 (MNDHEDTNGSKESF) are enriched in basic and acidic residues. The interval 53 to 142 (REQDIYLPIA…PLKLYLQKFR (90 aa)) is b domain. The DNA-binding element occupies 59 to 65 (LPIANVA). The subunit association domain (SAD) stretch occupies residues 86–97 (VQECVSEFISFI). Residue Lys140 forms a Glycyl lysine isopeptide (Lys-Gly) (interchain with G-Cter in ubiquitin) linkage. Residues 143–207 (EAMKGEKGIG…ISGVQQIQFS (65 aa)) are c domain.

This sequence belongs to the NFYB/HAP3 subunit family. Heterotrimeric transcription factor composed of three components, NF-YA, NF-YB and NF-YC. NF-YB and NF-YC must interact and dimerize for NF-YA association and DNA binding. Interacts with C1QBP. In terms of processing, monoubiquitination at Lys-140 plays an important role in transcriptional activation by allowing the deposition of histone H3 methylations as well as histone H2B monoubiquitination at 'Lys-121'.

The protein localises to the nucleus. Component of the sequence-specific heterotrimeric transcription factor (NF-Y) which specifically recognizes a 5'-CCAAT-3' box motif found in the promoters of its target genes. NF-Y can function as both an activator and a repressor, depending on its interacting cofactors. This chain is Nuclear transcription factor Y subunit beta (Nfyb), found in Mus musculus (Mouse).